The following is a 212-amino-acid chain: MQHPLYQQATYLKSAPDLSHCPEDFGYEVAFAGRSNAGKSSALNVITSQRGLAKTSKTPGRTQLINFFECDEQRKLVDLPGYGYAKVNVNTKRAWERSLSQYIEVRSSLKGLIMMVDSRMPPTEIDLMMLDWTLTLNLPVHILLTKSDKLKKGPAQNSLLKMRQLLNEKYPHATVQLFSSLKRQGLDEVWAKLDEWMEYERPVKSQPETKES.

Residues 25–199 enclose the EngB-type G domain; the sequence is FGYEVAFAGR…WAKLDEWMEY (175 aa). Residues 33-40, 60-64, 78-81, 145-148, and 178-180 contribute to the GTP site; these read GRSNAGKS, GRTQL, DLPG, TKSD, and FSS. Positions 40 and 62 each coordinate Mg(2+).

The protein belongs to the TRAFAC class TrmE-Era-EngA-EngB-Septin-like GTPase superfamily. EngB GTPase family. The cofactor is Mg(2+).

Functionally, necessary for normal cell division and for the maintenance of normal septation. This chain is Probable GTP-binding protein EngB, found in Hydrogenovibrio crunogenus (strain DSM 25203 / XCL-2) (Thiomicrospira crunogena).